We begin with the raw amino-acid sequence, 625 residues long: tRNA (uracil-5-)-methyltransferase homolog A (625 aa).

Disordered regions lie at residues 1–37 and 145–165; these read MSENLDNEGPKPMESCGQESSSALSCPTVSVPPAAPA and RPKADPMARRRRQEGESEPPV. The segment covering 27–37 has biased composition (low complexity); it reads PTVSVPPAAPA. Residues 73-146 enclose the RRM domain; sequence FKLELQNVPR…RPLSVRLARP (74 aa). Positions 180–209 form a coiled coil; the sequence is YAEQLERKQLECEQVLQKLAKEIGSTNRAL. S378 carries the post-translational modification Phosphoserine. The S-adenosyl-L-methionine site is built by Q411, E461, and D510. Residue C538 is the Nucleophile of the active site. Residue E581 is the Proton acceptor of the active site. Residues 594-625 are disordered; it reads GTGVLGPHSPPAQPTPGPPDNTLQETGTFPSS. Pro residues predominate over residues 601–612; that stretch reads HSPPAQPTPGPP. S602 carries the phosphoserine modification. The span at 614–625 shows a compositional bias: polar residues; sequence NTLQETGTFPSS.

This sequence belongs to the class I-like SAM-binding methyltransferase superfamily. RNA M5U methyltransferase family.

It localises to the cytoplasm. The protein resides in the cytosol. The catalysed reaction is uridine(54) in tRNA + S-adenosyl-L-methionine = 5-methyluridine(54) in tRNA + S-adenosyl-L-homocysteine + H(+). The enzyme catalyses a uridine in mRNA + S-adenosyl-L-methionine = a 5-methyluridine in mRNA + S-adenosyl-L-homocysteine + H(+). Its function is as follows. S-adenosyl-L-methionine-dependent methyltransferase that catalyzes the formation of 5-methyl-uridine in tRNAs and some mRNAs. Mainly catalyzes the methylation of uridine at position 54 (m5U54) in cytosolic tRNAs. Also able to mediate the formation of 5-methyl-uridine in some mRNAs. The protein is tRNA (uracil-5-)-methyltransferase homolog A of Homo sapiens (Human).